The sequence spans 264 residues: Thiazole synthase (264 aa).

K106 (schiff-base intermediate with DXP) is an active-site residue. 1-deoxy-D-xylulose 5-phosphate contacts are provided by residues G167, 193-194, and 215-216; these read AG and NS.

This sequence belongs to the ThiG family. As to quaternary structure, homotetramer. Forms heterodimers with either ThiH or ThiS.

The protein resides in the cytoplasm. The catalysed reaction is [ThiS sulfur-carrier protein]-C-terminal-Gly-aminoethanethioate + 2-iminoacetate + 1-deoxy-D-xylulose 5-phosphate = [ThiS sulfur-carrier protein]-C-terminal Gly-Gly + 2-[(2R,5Z)-2-carboxy-4-methylthiazol-5(2H)-ylidene]ethyl phosphate + 2 H2O + H(+). It functions in the pathway cofactor biosynthesis; thiamine diphosphate biosynthesis. Functionally, catalyzes the rearrangement of 1-deoxy-D-xylulose 5-phosphate (DXP) to produce the thiazole phosphate moiety of thiamine. Sulfur is provided by the thiocarboxylate moiety of the carrier protein ThiS. In vitro, sulfur can be provided by H(2)S. This is Thiazole synthase from Azotobacter vinelandii (strain DJ / ATCC BAA-1303).